A 461-amino-acid chain; its full sequence is V-type ATP synthase beta chain (461 aa).

It belongs to the ATPase alpha/beta chains family.

Its function is as follows. Produces ATP from ADP in the presence of a proton gradient across the membrane. The V-type beta chain is a regulatory subunit. The sequence is that of V-type ATP synthase beta chain from Clostridium botulinum (strain Kyoto / Type A2).